We begin with the raw amino-acid sequence, 322 residues long: Elongation factor P--(R)-beta-lysine ligase (322 aa).

Substrate is bound at residue 72 to 74 (SPE). Residues 96 to 98 (RNN) and Asn-106 contribute to the ATP site. Residue Tyr-115 participates in substrate binding. Position 241-242 (241-242 (EL)) interacts with ATP. Substrate is bound at residue Glu-248. ATP is bound at residue Gly-297.

Belongs to the class-II aminoacyl-tRNA synthetase family. EpmA subfamily. As to quaternary structure, homodimer.

The enzyme catalyses D-beta-lysine + L-lysyl-[protein] + ATP = N(6)-((3R)-3,6-diaminohexanoyl)-L-lysyl-[protein] + AMP + diphosphate + H(+). Functionally, with EpmB is involved in the beta-lysylation step of the post-translational modification of translation elongation factor P (EF-P). Catalyzes the ATP-dependent activation of (R)-beta-lysine produced by EpmB, forming a lysyl-adenylate, from which the beta-lysyl moiety is then transferred to the epsilon-amino group of a conserved specific lysine residue in EF-P. This is Elongation factor P--(R)-beta-lysine ligase from Buchnera aphidicola subsp. Baizongia pistaciae (strain Bp).